The chain runs to 255 residues: Putative glutamine amidotransferase YafJ (255 aa).

Cys-2 serves as the catalytic For GATase activity. Residues 2–251 (CELLGMSANV…PGEWRLFCLG (250 aa)) form the Glutamine amidotransferase type-2 domain.

In Escherichia coli (strain K12), this protein is Putative glutamine amidotransferase YafJ (yafJ).